The primary structure comprises 308 residues: Ribosomal RNA small subunit methyltransferase H (308 aa).

S-adenosyl-L-methionine-binding positions include 34 to 36 (GGH), Asp-54, Phe-80, Asp-101, and Gln-108.

This sequence belongs to the methyltransferase superfamily. RsmH family.

The protein localises to the cytoplasm. The catalysed reaction is cytidine(1402) in 16S rRNA + S-adenosyl-L-methionine = N(4)-methylcytidine(1402) in 16S rRNA + S-adenosyl-L-homocysteine + H(+). In terms of biological role, specifically methylates the N4 position of cytidine in position 1402 (C1402) of 16S rRNA. In Ureaplasma urealyticum serovar 10 (strain ATCC 33699 / Western), this protein is Ribosomal RNA small subunit methyltransferase H.